Reading from the N-terminus, the 161-residue chain is Lipoprotein signal peptidase (161 aa).

The next 3 membrane-spanning stretches (helical) occupy residues 9-29 (ISLL…WLIT), 63-83 (KMLF…IFYI), and 88-108 (FNLF…GNFI). Active-site residues include Asp-118 and Asp-136. The chain crosses the membrane as a helical span at residues 131 to 151 (IFNIADSSLTIGVIFVIIALI).

This sequence belongs to the peptidase A8 family.

It localises to the cell membrane. It catalyses the reaction Release of signal peptides from bacterial membrane prolipoproteins. Hydrolyzes -Xaa-Yaa-Zaa-|-(S,diacylglyceryl)Cys-, in which Xaa is hydrophobic (preferably Leu), and Yaa (Ala or Ser) and Zaa (Gly or Ala) have small, neutral side chains.. It participates in protein modification; lipoprotein biosynthesis (signal peptide cleavage). This protein specifically catalyzes the removal of signal peptides from prolipoproteins. The chain is Lipoprotein signal peptidase from Staphylococcus epidermidis (strain ATCC 12228 / FDA PCI 1200).